Here is a 244-residue protein sequence, read N- to C-terminus: Ribosomal RNA small subunit methyltransferase NEP1 (244 aa).

Residues 1 to 33 (MSAASGGFQPRERRFSVQEQDWETTPPKKLRLG) form a disordered region. Phosphoserine is present on residues Ser5 and Ser16. S-adenosyl-L-methionine-binding positions include Thr176, Gly201, Gly206, and 219 to 224 (ISNYPL).

The protein belongs to the class IV-like SAM-binding methyltransferase superfamily. RNA methyltransferase NEP1 family. In terms of assembly, homodimer. Part of the small subunit (SSU) processome, composed of more than 70 proteins and the RNA chaperone small nucleolar RNA (snoRNA) U3.

It is found in the nucleus. It localises to the nucleolus. It catalyses the reaction pseudouridine(1248) in human 18S rRNA + S-adenosyl-L-methionine = N(1)-methylpseudouridine(1248) in human 18S rRNA + S-adenosyl-L-homocysteine + H(+). In terms of biological role, S-adenosyl-L-methionine-dependent pseudouridine N(1)-methyltransferase that methylates pseudouridine at position in 18S rRNA. Involved the biosynthesis of the hypermodified N1-methyl-N3-(3-amino-3-carboxypropyl) pseudouridine (m1acp3-Psi) conserved in eukaryotic 18S rRNA. Is not able to methylate uridine at this position. Also has an essential role in 40S ribosomal subunit biogenesis independent on its methyltransferase activity, facilitating the incorporation of ribosomal protein S19 during the formation of pre-ribosomes. Part of the small subunit (SSU) processome, first precursor of the small eukaryotic ribosomal subunit. During the assembly of the SSU processome in the nucleolus, many ribosome biogenesis factors, an RNA chaperone and ribosomal proteins associate with the nascent pre-rRNA and work in concert to generate RNA folding, modifications, rearrangements and cleavage as well as targeted degradation of pre-ribosomal RNA by the RNA exosome. In Mus musculus (Mouse), this protein is Ribosomal RNA small subunit methyltransferase NEP1.